A 284-amino-acid polypeptide reads, in one-letter code: MNNKIVKVGNIEVANDKPFTLFGGMNVLESRDMAMRVCEQYVEVTNKLGVPYVFKASFDKANRSSIHSYRGPGMEEGLKIFQELKDTFGVNIITDVHEIYQCKPVAEVVDIIQLPAFLARQTDLVEAMARTGAVINVKKPQFLSPGQMGNIVEKIAECGNENVILCDRGTNFGYDNLVVDMLGFNIMKKVSKGCPVIFDVTHSLQCRDPFGAASGGRRDQVTELARSGMAIGLAGLFLEAHPDPNNAKCDGPSALPLSKLEAFVSQMKAIDDLVKSFEEIDTSN.

Belongs to the KdsA family.

The protein localises to the cytoplasm. It carries out the reaction D-arabinose 5-phosphate + phosphoenolpyruvate + H2O = 3-deoxy-alpha-D-manno-2-octulosonate-8-phosphate + phosphate. It participates in carbohydrate biosynthesis; 3-deoxy-D-manno-octulosonate biosynthesis; 3-deoxy-D-manno-octulosonate from D-ribulose 5-phosphate: step 2/3. The protein operates within bacterial outer membrane biogenesis; lipopolysaccharide biosynthesis. This is 2-dehydro-3-deoxyphosphooctonate aldolase from Actinobacillus pleuropneumoniae serotype 7 (strain AP76).